Here is a 309-residue protein sequence, read N- to C-terminus: Chronophin (309 aa).

The active-site Nucleophile is D25. Mg(2+)-binding residues include D25 and D27. D27 acts as the Proton donor in catalysis. Substrate-binding positions include 58–60, H178, and K209; that span reads SNN. D234 serves as a coordination point for Mg(2+).

It belongs to the HAD-like hydrolase superfamily. In terms of assembly, homodimer. Mg(2+) serves as cofactor.

The protein resides in the cytoplasm. Its subcellular location is the cytosol. It localises to the cytoskeleton. The protein localises to the cell projection. It is found in the ruffle membrane. The protein resides in the lamellipodium membrane. Its subcellular location is the cell membrane. It carries out the reaction pyridoxal 5'-phosphate + H2O = pyridoxal + phosphate. It catalyses the reaction pyridoxine 5'-phosphate + H2O = pyridoxine + phosphate. The enzyme catalyses pyridoxamine + phosphate = pyridoxamine 5'-phosphate + H2O. The catalysed reaction is O-phospho-L-seryl-[protein] + H2O = L-seryl-[protein] + phosphate. Its function is as follows. Functions as a pyridoxal phosphate (PLP) phosphatase, which also catalyzes the dephosphorylation of pyridoxine 5'-phosphate (PNP) and pyridoxamine 5'-phosphate (PMP), with order of substrate preference PLP &gt; PNP &gt; PMP and therefore plays a role in vitamin B6 metabolism. Also functions as a protein serine phosphatase that specifically dephosphorylates 'Ser-3' in proteins of the actin-depolymerizing factor (ADF)/cofilin family like CFL1 and DSTN. Thereby, regulates cofilin-dependent actin cytoskeleton reorganization, being required for normal progress through mitosis and normal cytokinesis. Does not dephosphorylate phosphothreonines in LIMK1. Does not dephosphorylate peptides containing phosphotyrosine. This chain is Chronophin, found in Rattus norvegicus (Rat).